The primary structure comprises 858 residues: DNA mismatch repair protein MutS (858 aa).

602–609 (GPNMSGKS) contributes to the ATP binding site.

This sequence belongs to the DNA mismatch repair MutS family.

This protein is involved in the repair of mismatches in DNA. It is possible that it carries out the mismatch recognition step. This protein has a weak ATPase activity. Overexpression of mutSL partially suppresses the high spontaneous mutation frequency of a ytkD/mutM/mutY triple disruption which lacks the system required to prevent damage by oxidized guanine (8-oxo-dGTP). This suggests that MutSL also functions to repair mismatches due to oxidative stress in both growing and stationary phase cells. This Bacillus subtilis (strain 168) protein is DNA mismatch repair protein MutS.